A 282-amino-acid chain; its full sequence is Undecaprenyl-diphosphatase (282 aa).

7 helical membrane-spanning segments follow: residues 39–59 (PGAA…LIYF), 85–105 (ATMG…GLLF), 115–135 (SLYW…LTEV), 153–173 (IGWK…IPGS), 196–216 (FSFL…LYET), 230–250 (LLVA…FLIT), and 260–280 (FIIY…TGAI).

Belongs to the UppP family.

Its subcellular location is the cell inner membrane. The enzyme catalyses di-trans,octa-cis-undecaprenyl diphosphate + H2O = di-trans,octa-cis-undecaprenyl phosphate + phosphate + H(+). Catalyzes the dephosphorylation of undecaprenyl diphosphate (UPP). Confers resistance to bacitracin. The protein is Undecaprenyl-diphosphatase of Chlorobium chlorochromatii (strain CaD3).